A 280-amino-acid chain; its full sequence is Pantothenate synthetase (280 aa).

Residue 26 to 33 (MGNLHDGH) participates in ATP binding. Residue His-33 is the Proton donor of the active site. Gln-57 contacts (R)-pantoate. Gln-57 serves as a coordination point for beta-alanine. 147 to 150 (GKKD) contacts ATP. Gln-153 contributes to the (R)-pantoate binding site. 184–187 (LSSR) contacts ATP.

The protein belongs to the pantothenate synthetase family. In terms of assembly, homodimer.

It is found in the cytoplasm. The catalysed reaction is (R)-pantoate + beta-alanine + ATP = (R)-pantothenate + AMP + diphosphate + H(+). It participates in cofactor biosynthesis; (R)-pantothenate biosynthesis; (R)-pantothenate from (R)-pantoate and beta-alanine: step 1/1. Catalyzes the condensation of pantoate with beta-alanine in an ATP-dependent reaction via a pantoyl-adenylate intermediate. The chain is Pantothenate synthetase from Verminephrobacter eiseniae (strain EF01-2).